The following is a 239-amino-acid chain: Ribonuclease 3 (239 aa).

In terms of domain architecture, RNase III spans 12-137; it reads RAKLEALIGH…LIAAIYLDGG (126 aa). A Mg(2+)-binding site is contributed by Glu-50. Asp-54 is an active-site residue. Residues Asp-123 and Glu-126 each coordinate Mg(2+). The active site involves Glu-126. The DRBM domain maps to 162-231; the sequence is DAKTELQEWS…ATKMLEREGI (70 aa).

This sequence belongs to the ribonuclease III family. As to quaternary structure, homodimer. Mg(2+) serves as cofactor.

It localises to the cytoplasm. The catalysed reaction is Endonucleolytic cleavage to 5'-phosphomonoester.. Digests double-stranded RNA. Involved in the processing of primary rRNA transcript to yield the immediate precursors to the large and small rRNAs (23S and 16S). Processes some mRNAs, and tRNAs when they are encoded in the rRNA operon. Processes pre-crRNA and tracrRNA of type II CRISPR loci if present in the organism. The chain is Ribonuclease 3 from Rhizobium etli (strain ATCC 51251 / DSM 11541 / JCM 21823 / NBRC 15573 / CFN 42).